The primary structure comprises 195 residues: Pyridoxal 5'-phosphate synthase subunit PdxT (195 aa).

55 to 57 (GES) is a binding site for L-glutamine. The active-site Nucleophile is the Cys84. Residues Arg111 and 139–140 (IR) each bind L-glutamine. Residues His175 and Glu177 each act as charge relay system in the active site.

The protein belongs to the glutaminase PdxT/SNO family. As to quaternary structure, in the presence of PdxS, forms a dodecamer of heterodimers. Only shows activity in the heterodimer.

It catalyses the reaction aldehydo-D-ribose 5-phosphate + D-glyceraldehyde 3-phosphate + L-glutamine = pyridoxal 5'-phosphate + L-glutamate + phosphate + 3 H2O + H(+). The catalysed reaction is L-glutamine + H2O = L-glutamate + NH4(+). It participates in cofactor biosynthesis; pyridoxal 5'-phosphate biosynthesis. Its function is as follows. Catalyzes the hydrolysis of glutamine to glutamate and ammonia as part of the biosynthesis of pyridoxal 5'-phosphate. The resulting ammonia molecule is channeled to the active site of PdxS. The chain is Pyridoxal 5'-phosphate synthase subunit PdxT from Methanosphaerula palustris (strain ATCC BAA-1556 / DSM 19958 / E1-9c).